Reading from the N-terminus, the 655-residue chain is D-xylonate dehydratase YjhG (655 aa).

This sequence belongs to the IlvD/Edd family.

The catalysed reaction is D-xylonate = 2-dehydro-3-deoxy-D-arabinonate + H2O. With respect to regulation, activity is increased in the presence of Mn(+) and Mg(2+). Inhibited by thiol compounds. Its function is as follows. Catalyzes the dehydration of D-xylonic acid to form 2-dehydro-3-deoxy-D-pentonate. The polypeptide is D-xylonate dehydratase YjhG (yjhG) (Escherichia coli (strain K12)).